A 746-amino-acid chain; its full sequence is Protein O-mannosyl-transferase 1 (746 aa).

7 consecutive transmembrane segments (helical) span residues 30-50 (PLVV…LGLL), 90-110 (FGHM…NFLW), 121-141 (VPIW…VPMA), 144-164 (IVLE…LMLI), 176-196 (LLES…LKFF), 228-248 (MGIF…WNLI), and 266-286 (IVAL…VHLM). 3 MIR domains span residues 318-381 (PLEV…VKDP), 392-449 (PRPV…LDIV), and 453-513 (SNRD…VEEH). Residues N435, N471, and N539 are each glycosylated (N-linked (GlcNAc...) asparagine). 3 consecutive transmembrane segments (helical) span residues 597 to 617 (IVIW…FFWY), 636 to 656 (WVLA…PFFL), and 660 to 680 (VLFL…LPIV).

This sequence belongs to the glycosyltransferase 39 family.

It is found in the endoplasmic reticulum membrane. The enzyme catalyses a di-trans,poly-cis-dolichyl beta-D-mannosyl phosphate + L-seryl-[protein] = 3-O-(alpha-D-mannosyl)-L-seryl-[protein] + a di-trans,poly-cis-dolichyl phosphate + H(+). It carries out the reaction a di-trans,poly-cis-dolichyl beta-D-mannosyl phosphate + L-threonyl-[protein] = 3-O-(alpha-D-mannosyl)-L-threonyl-[protein] + a di-trans,poly-cis-dolichyl phosphate + H(+). It functions in the pathway protein modification; protein glycosylation. In terms of biological role, transfers mannosyl residues to the hydroxyl group of serine or threonine residues. Coexpression of both POMT1 and POMT2 is necessary for enzyme activity, expression of either POMT1 or POMT2 alone is insufficient. Essentially dedicated to O-mannosylation of alpha-DAG1 and few other proteins but not of cadherins and protocaherins. The sequence is that of Protein O-mannosyl-transferase 1 (Pomt1) from Mus musculus (Mouse).